A 144-amino-acid polypeptide reads, in one-letter code: Ribosomal RNA large subunit methyltransferase H (144 aa).

S-adenosyl-L-methionine contacts are provided by residues Leu-68, Gly-96, and 112-117; that span reads FSKLTF.

The protein belongs to the RNA methyltransferase RlmH family. Homodimer.

Its subcellular location is the cytoplasm. The catalysed reaction is pseudouridine(1915) in 23S rRNA + S-adenosyl-L-methionine = N(3)-methylpseudouridine(1915) in 23S rRNA + S-adenosyl-L-homocysteine + H(+). Its function is as follows. Specifically methylates the pseudouridine at position 1915 (m3Psi1915) in 23S rRNA. The polypeptide is Ribosomal RNA large subunit methyltransferase H (Mycoplasmopsis synoviae (strain 53) (Mycoplasma synoviae)).